The sequence spans 121 residues: Small ribosomal subunit protein uS13 (121 aa).

Residues glycine 95–serine 121 form a disordered region.

This sequence belongs to the universal ribosomal protein uS13 family. As to quaternary structure, part of the 30S ribosomal subunit. Forms a loose heterodimer with protein S19. Forms two bridges to the 50S subunit in the 70S ribosome.

In terms of biological role, located at the top of the head of the 30S subunit, it contacts several helices of the 16S rRNA. In the 70S ribosome it contacts the 23S rRNA (bridge B1a) and protein L5 of the 50S subunit (bridge B1b), connecting the 2 subunits; these bridges are implicated in subunit movement. Contacts the tRNAs in the A and P-sites. The polypeptide is Small ribosomal subunit protein uS13 (Campylobacter jejuni subsp. jejuni serotype O:6 (strain 81116 / NCTC 11828)).